The chain runs to 141 residues: Large ribosomal subunit protein uL11 (141 aa).

The protein belongs to the universal ribosomal protein uL11 family. Part of the ribosomal stalk of the 50S ribosomal subunit. Interacts with L10 and the large rRNA to form the base of the stalk. L10 forms an elongated spine to which L12 dimers bind in a sequential fashion forming a multimeric L10(L12)X complex. One or more lysine residues are methylated.

Forms part of the ribosomal stalk which helps the ribosome interact with GTP-bound translation factors. In Chlorobium luteolum (strain DSM 273 / BCRC 81028 / 2530) (Pelodictyon luteolum), this protein is Large ribosomal subunit protein uL11.